We begin with the raw amino-acid sequence, 327 residues long: DNA-directed RNA polymerase subunit alpha (327 aa).

Positions 1–231 (MIYQMQMPAK…DHIMYFANFS (231 aa)) are alpha N-terminal domain (alpha-NTD). Residues 247-327 (DEFESMRKLL…GMDITRYQMK (81 aa)) are alpha C-terminal domain (alpha-CTD).

Belongs to the RNA polymerase alpha chain family. As to quaternary structure, homodimer. The RNAP catalytic core consists of 2 alpha, 1 beta, 1 beta' and 1 omega subunit. When a sigma factor is associated with the core the holoenzyme is formed, which can initiate transcription.

The enzyme catalyses RNA(n) + a ribonucleoside 5'-triphosphate = RNA(n+1) + diphosphate. DNA-dependent RNA polymerase catalyzes the transcription of DNA into RNA using the four ribonucleoside triphosphates as substrates. This chain is DNA-directed RNA polymerase subunit alpha, found in Chlorobium phaeobacteroides (strain DSM 266 / SMG 266 / 2430).